Consider the following 168-residue polypeptide: uncharacterized protein (168 aa).

The tract at residues 1–52 is disordered; the sequence is MVLGLASFPESLSSQSETATQPRRPSVKWDLGSDYRKGTEETTASGSNFRRE. The segment covering 10–23 has biased composition (polar residues); sequence ESLSSQSETATQPR. Over residues 31-40 the composition is skewed to basic and acidic residues; sequence LGSDYRKGTE.

This is an uncharacterized protein from Mus musculus (Mouse).